The primary structure comprises 226 residues: MSADDQKRISGEAAAELVEAGMVVGLGTGSTAAWFVKALAARKLDIRGVPTSEATANLARELGIALTALDDVKSIDLTVDGADEIGPGLSLIKGGGAALLREKLVWEASKRCVVIADAAKHVKTLGKFPLPIEVVRFGHVHTGQRLADIAAEFDLLPPRLRMADRGVVVTDGGNVIYDMPSGVIAEPAALAAALKTVTGVVDHGLFLDLADEALLGTDQGVVKLVP.

Residues 28–31, 80–83, and 93–96 each bind substrate; these read TGST, DGAD, and KGGG. The active-site Proton acceptor is the glutamate 102. Lysine 120 is a substrate binding site.

Belongs to the ribose 5-phosphate isomerase family. In terms of assembly, homodimer.

The catalysed reaction is aldehydo-D-ribose 5-phosphate = D-ribulose 5-phosphate. The protein operates within carbohydrate degradation; pentose phosphate pathway; D-ribose 5-phosphate from D-ribulose 5-phosphate (non-oxidative stage): step 1/1. Its function is as follows. Catalyzes the reversible conversion of ribose-5-phosphate to ribulose 5-phosphate. This Caulobacter sp. (strain K31) protein is Ribose-5-phosphate isomerase A.